Consider the following 197-residue polypeptide: Scoloptoxin SSD20 (197 aa).

The N-terminal stretch at 1 to 6 (PPMTTE) is a signal peptide.

As to expression, expressed by the venom gland.

It localises to the secreted. Functionally, may act as a voltage-gated potassium channel inhibitor. Is highly similar to the subunit beta of SSD14 which, when complexed with subunit alpha, induces platelet aggregation and hemolysis. The chain is Scoloptoxin SSD20 from Scolopendra dehaani (Thai centipede).